Consider the following 293-residue polypeptide: MKISITAPAKINLSLDALYKREDGYHEVEMVMTTIDLADRLYLERLDEDKIVLDVKAHFIPEDRRNLIYQAALLLKKRFDVKMGVRITIDKHIPVSAGLAGGSSDAAAALKGLNVIWELGLSIEELAEISSEIGSDIAFCVYGGTALATGRGEKISALPNIPGCWIVLAKPSISVSTPTIYKELQVDNVEHPDTQKMIESIKNGDLDGIFAATGNVLESVTLEKNPQVKRIKDRMLAFGAEAALMSGSGPTVFALIKQYSRAKRVYNGLRGFCEEVYMVRPWSEGENDTNINY.

K10 is an active-site residue. 94–104 (PVSAGLAGGSS) is an ATP binding site. The active site involves D136.

It belongs to the GHMP kinase family. IspE subfamily.

It carries out the reaction 4-CDP-2-C-methyl-D-erythritol + ATP = 4-CDP-2-C-methyl-D-erythritol 2-phosphate + ADP + H(+). It participates in isoprenoid biosynthesis; isopentenyl diphosphate biosynthesis via DXP pathway; isopentenyl diphosphate from 1-deoxy-D-xylulose 5-phosphate: step 3/6. Functionally, catalyzes the phosphorylation of the position 2 hydroxy group of 4-diphosphocytidyl-2C-methyl-D-erythritol. This Listeria monocytogenes serovar 1/2a (strain ATCC BAA-679 / EGD-e) protein is 4-diphosphocytidyl-2-C-methyl-D-erythritol kinase.